A 482-amino-acid chain; its full sequence is Adenylosuccinate lyase (482 aa).

Residues 14-15, 82-84, and 108-109 contribute to the substrate site; these read RY, RHD, and TS. The active-site Proton donor/acceptor is the H156. Residue Q238 coordinates substrate. S286 (proton donor/acceptor) is an active-site residue. The substrate site is built by R300, R326, S331, and R335.

It belongs to the lyase 1 family. Adenylosuccinate lyase subfamily. Homotetramer. Residues from neighboring subunits contribute catalytic and substrate-binding residues to each active site.

It carries out the reaction N(6)-(1,2-dicarboxyethyl)-AMP = fumarate + AMP. The catalysed reaction is (2S)-2-[5-amino-1-(5-phospho-beta-D-ribosyl)imidazole-4-carboxamido]succinate = 5-amino-1-(5-phospho-beta-D-ribosyl)imidazole-4-carboxamide + fumarate. It functions in the pathway purine metabolism; AMP biosynthesis via de novo pathway; AMP from IMP: step 2/2. Its pathway is purine metabolism; IMP biosynthesis via de novo pathway; 5-amino-1-(5-phospho-D-ribosyl)imidazole-4-carboxamide from 5-amino-1-(5-phospho-D-ribosyl)imidazole-4-carboxylate: step 2/2. The protein is Adenylosuccinate lyase (ade8) of Schizosaccharomyces pombe (strain 972 / ATCC 24843) (Fission yeast).